Reading from the N-terminus, the 296-residue chain is Ribosomal RNA small subunit methyltransferase A (296 aa).

Residues asparagine 32, leucine 34, glycine 59, glutamate 80, aspartate 105, and asparagine 130 each coordinate S-adenosyl-L-methionine.

It belongs to the class I-like SAM-binding methyltransferase superfamily. rRNA adenine N(6)-methyltransferase family. RsmA subfamily.

It localises to the cytoplasm. The catalysed reaction is adenosine(1518)/adenosine(1519) in 16S rRNA + 4 S-adenosyl-L-methionine = N(6)-dimethyladenosine(1518)/N(6)-dimethyladenosine(1519) in 16S rRNA + 4 S-adenosyl-L-homocysteine + 4 H(+). Functionally, specifically dimethylates two adjacent adenosines (A1518 and A1519) in the loop of a conserved hairpin near the 3'-end of 16S rRNA in the 30S particle. May play a critical role in biogenesis of 30S subunits. The protein is Ribosomal RNA small subunit methyltransferase A of Levilactobacillus brevis (strain ATCC 367 / BCRC 12310 / CIP 105137 / JCM 1170 / LMG 11437 / NCIMB 947 / NCTC 947) (Lactobacillus brevis).